A 91-amino-acid polypeptide reads, in one-letter code: ATP synthase subunit c 2 (91 aa).

Helical transmembrane passes span phenylalanine 4–isoleucine 24 and isoleucine 53–leucine 73.

This sequence belongs to the ATPase C chain family. F-type ATPases have 2 components, F(1) - the catalytic core - and F(0) - the membrane proton channel. F(1) has five subunits: alpha(3), beta(3), gamma(1), delta(1), epsilon(1). F(0) has three main subunits: a(1), b(2) and c(10-14). The alpha and beta chains form an alternating ring which encloses part of the gamma chain. F(1) is attached to F(0) by a central stalk formed by the gamma and epsilon chains, while a peripheral stalk is formed by the delta and b chains.

The protein localises to the cell inner membrane. In terms of biological role, f(1)F(0) ATP synthase produces ATP from ADP in the presence of a proton or sodium gradient. F-type ATPases consist of two structural domains, F(1) containing the extramembraneous catalytic core and F(0) containing the membrane proton channel, linked together by a central stalk and a peripheral stalk. During catalysis, ATP synthesis in the catalytic domain of F(1) is coupled via a rotary mechanism of the central stalk subunits to proton translocation. Functionally, key component of the F(0) channel; it plays a direct role in translocation across the membrane. A homomeric c-ring of between 10-14 subunits forms the central stalk rotor element with the F(1) delta and epsilon subunits. The sequence is that of ATP synthase subunit c 2 from Pelobacter propionicus (strain DSM 2379 / NBRC 103807 / OttBd1).